Consider the following 48-residue polypeptide: uncharacterized protein (48 aa).

This is an uncharacterized protein from Saccharomyces cerevisiae (strain ATCC 204508 / S288c) (Baker's yeast).